We begin with the raw amino-acid sequence, 190 residues long: MSKIYIDERSDAEIVCEAIKNIGLEGVTAVQLTRQLNMEKREVNKALYDLQRSAMVYSSDDIPPRWFMTTEADKPDAMTMADVIIDDVSREKSMREDHKSFDDVIPAKKIIDWKNANPVTIINEYCQITKRDWSFRIESVGPSNSPTFYACVDIDGRVFDKADGKSKRDAKNNAAKLAVDKLLGYVIIRF.

The Z-binding domain maps to 5–70 (YIDERSDAEI…DIPPRWFMTT (66 aa)). A DRBM domain is found at 117–184 (NPVTIINEYC…AKLAVDKLLG (68 aa)).

Belongs to the orthopoxvirus OPG065 family. Interacts with host G1P2/ISG15. Interacts with host EIF2AK2/PKR. Interacts with host ZBP1.

Its function is as follows. RNA-binding protein that plays a role in the inhibition of multiple cellular antiviral responses activated by double-stranded RNA (dsRNA), such as inhibition of PKR activation, necroptosis, and IFN-mediated antiviral activities. Recognizes and binds Z-RNA structures via its Z-binding domain and dsRNA via its DRBM domain: RNA-binding activity is required to escape host ZBP1-dependent necroptosis. Mechanistically, the Z-binding domain binds Z-RNAs that are produced during vaccinia virus infection, thereby competing with Z-RNA detection by host ZBP1, suppressing ZBP1-dependent necroptosis. Acts as a key inhibitor of the interferon response by blocking the phosphorylation and subsequent activation of IRF3 and IRF7 kinases that are required for interferon-alpha gene expression. Inhibits NF-kappa-B activation and the ubiquitin-like protein ISG15, which is an early antiviral protein. The binding with host ISG15 subsequently blocks host ISGylation. The polypeptide is RNA-binding protein OPG065 (OPG065) (Homo sapiens (Human)).